A 122-amino-acid chain; its full sequence is Large ribosomal subunit protein uL14 (122 aa).

It belongs to the universal ribosomal protein uL14 family. As to quaternary structure, part of the 50S ribosomal subunit. Forms a cluster with proteins L3 and L19. In the 70S ribosome, L14 and L19 interact and together make contacts with the 16S rRNA in bridges B5 and B8.

Functionally, binds to 23S rRNA. Forms part of two intersubunit bridges in the 70S ribosome. The chain is Large ribosomal subunit protein uL14 from Verminephrobacter eiseniae (strain EF01-2).